A 384-amino-acid chain; its full sequence is UPF0284 protein alr0297 (384 aa).

It belongs to the UPF0284 family.

This is UPF0284 protein alr0297 from Nostoc sp. (strain PCC 7120 / SAG 25.82 / UTEX 2576).